The primary structure comprises 52 residues: Defensin D2 (52 aa).

4 disulfide bridges follow: Cys8/Cys52, Cys19/Cys39, Cys25/Cys46, and Cys29/Cys48.

Distributed in the epidermal cell layer of leaves and in the subepidermal layer region of stems. Not in roots.

Its subcellular location is the secreted. The protein localises to the cell wall. Antimicrobial peptide. Active against Fusarium spp., Gram-positive and Gram-negative bacterial pathogens. The protein is Defensin D2 of Spinacia oleracea (Spinach).